A 520-amino-acid chain; its full sequence is Ribonuclease Y (520 aa).

A helical transmembrane segment spans residues 3-23 (IEIQWIGIGAAFLVGAIGGAL). Positions 210-273 (AVSVVPLPND…EVARLALERL (64 aa)) constitute a KH domain. The region spanning 336–429 (VLQHSIEVAF…VQAADALSGA (94 aa)) is the HD domain.

This sequence belongs to the RNase Y family.

The protein resides in the cell membrane. Endoribonuclease that initiates mRNA decay. The chain is Ribonuclease Y from Syntrophotalea carbinolica (strain DSM 2380 / NBRC 103641 / GraBd1) (Pelobacter carbinolicus).